A 190-amino-acid polypeptide reads, in one-letter code: Acireductone dioxygenase (190 aa).

H101, H103, E107, and H145 together coordinate Fe(2+). Positions 101, 103, 107, and 145 each coordinate Ni(2+).

This sequence belongs to the acireductone dioxygenase (ARD) family. In terms of assembly, monomer. Fe(2+) is required as a cofactor. It depends on Ni(2+) as a cofactor.

The catalysed reaction is 1,2-dihydroxy-5-(methylsulfanyl)pent-1-en-3-one + O2 = 3-(methylsulfanyl)propanoate + CO + formate + 2 H(+). The enzyme catalyses 1,2-dihydroxy-5-(methylsulfanyl)pent-1-en-3-one + O2 = 4-methylsulfanyl-2-oxobutanoate + formate + 2 H(+). Its pathway is amino-acid biosynthesis; L-methionine biosynthesis via salvage pathway; L-methionine from S-methyl-5-thio-alpha-D-ribose 1-phosphate: step 5/6. Its function is as follows. Catalyzes 2 different reactions between oxygen and the acireductone 1,2-dihydroxy-3-keto-5-methylthiopentene (DHK-MTPene) depending upon the metal bound in the active site. Fe-containing acireductone dioxygenase (Fe-ARD) produces formate and 2-keto-4-methylthiobutyrate (KMTB), the alpha-ketoacid precursor of methionine in the methionine recycle pathway. Ni-containing acireductone dioxygenase (Ni-ARD) produces methylthiopropionate, carbon monoxide and formate, and does not lie on the methionine recycle pathway. The chain is Acireductone dioxygenase from Saccharopolyspora erythraea (strain ATCC 11635 / DSM 40517 / JCM 4748 / NBRC 13426 / NCIMB 8594 / NRRL 2338).